Consider the following 120-residue polypeptide: UPF0231 protein YacL (120 aa).

The protein belongs to the UPF0231 family.

This chain is UPF0231 protein YacL, found in Salmonella agona (strain SL483).